Reading from the N-terminus, the 713-residue chain is TWiK family of potassium channels protein 12 (713 aa).

Over 1 to 15 (MTLFKKIQWFCNLIR) the chain is Cytoplasmic. A helical membrane pass occupies residues 16 to 36 (LRSYYKFLLLIAYTAFGAWLF). N-linked (GlcNAc...) asparagine glycosylation is found at Asn53, Asn77, and Asn98. The pore-forming intramembrane region spans 112–132 (WTWTGAMFYAGQLYTTIGYGY). Residues 142 to 162 (ICTIFYALFGIPCFLMYLKIE) form a helical membrane-spanning segment. The Cytoplasmic portion of the chain corresponds to 163–242 (NAIEWKKDKQ…AEERKKKPFP (80 aa)). The helical transmembrane segment at 243-263 (IPIAIIMLIIWICFSASMFCI) threads the bilayer. An intramembrane region (pore-forming) is located at residues 267–287 (TWVFSSAVYFFIVSISTVGLG). The chain crosses the membrane as a helical span at residues 298–318 (VFNFLLILVGLALLSMCFELI). Residues 319-713 (TDRVAKWKQK…LSKRDASTMA (395 aa)) lie on the Cytoplasmic side of the membrane.

It belongs to the two pore domain potassium channel (TC 1.A.1.8) family.

Its subcellular location is the membrane. The chain is TWiK family of potassium channels protein 12 (twk-12) from Caenorhabditis elegans.